A 238-amino-acid polypeptide reads, in one-letter code: Aspartate/glutamate leucyltransferase (238 aa).

This sequence belongs to the R-transferase family. Bpt subfamily.

The protein resides in the cytoplasm. The catalysed reaction is N-terminal L-glutamyl-[protein] + L-leucyl-tRNA(Leu) = N-terminal L-leucyl-L-glutamyl-[protein] + tRNA(Leu) + H(+). It catalyses the reaction N-terminal L-aspartyl-[protein] + L-leucyl-tRNA(Leu) = N-terminal L-leucyl-L-aspartyl-[protein] + tRNA(Leu) + H(+). Its function is as follows. Functions in the N-end rule pathway of protein degradation where it conjugates Leu from its aminoacyl-tRNA to the N-termini of proteins containing an N-terminal aspartate or glutamate. The sequence is that of Aspartate/glutamate leucyltransferase from Shewanella oneidensis (strain ATCC 700550 / JCM 31522 / CIP 106686 / LMG 19005 / NCIMB 14063 / MR-1).